Consider the following 561-residue polypeptide: Nephronectin (561 aa).

The N-terminal stretch at 1–19 is a signal peptide; that stretch reads MAVLLAAVLASSLYLQVAA. The 36-residue stretch at 52 to 87 folds into the EGF-like 1 domain; sequence SWGQCQPVCQPQCKHGECVGPNKCKCHPGFAGKTCN. Disulfide bonds link C56–C69, C60–C75, C77–C86, C93–C104, C100–C113, and C115–C127. The region spanning 89–128 is the EGF-like 2; calcium-binding domain; sequence DLNECGLKPRPCKHRCMNTFGSYKCYCLNGYMLLPDGSCS. Residues 132–168 enclose the EGF-like 3 domain; sequence SCSMANCQYGCDVVKGQVRCQCPSPGLQLAPDGRTCV. One can recognise an EGF-like 4; calcium-binding domain in the interval 169–213; it reads DIDECATGRVSCPRFRQCVNTFGSYICKCHTGFDLMYIGGKYQCH. Intrachain disulfides connect C173–C186, C180–C195, C197–C212, C218–C231, C225–C240, and C242–C253. An EGF-like 5; calcium-binding domain is found at 214–254; it reads DIDECSLGQHQCSSYARCYNIHGSYKCQCRDGYEGDGLNCV. The disordered stretch occupies residues 266-370; that stretch reads PIHMPERNGT…TSTTTRVITV (105 aa). Low complexity predominate over residues 307–316; sequence TNRPTSKPTT. Positions 317-348 are enriched in pro residues; sequence RPTPNPTPQPTPPPPPPLPTEPRTTPLPPTPE. Over residues 352–366 the composition is skewed to low complexity; the sequence is TRPTTIAPATSTTTR. Positions 382–384 match the Integrin interaction motif; sequence RGD. Residues 420-561 form the MAM domain; sequence HSCNFDHGLC…DDVSLKRGRC (142 aa).

This sequence belongs to the nephronectin family. Homodimer and homotrimer. As to expression, expressed in kidney (at protein level).

Its subcellular location is the secreted. It is found in the extracellular space. It localises to the extracellular matrix. In terms of biological role, functional ligand of integrin alpha-8/beta-1 in kidney development. Regulates the expression of GDNF with integrin alpha-8/beta-1 which is essential for kidney development. May also play a role in the development and function of various tissues, regulating cell adhesion, spreading and survival through the binding of several integrins. In Mus musculus (Mouse), this protein is Nephronectin (Npnt).